Consider the following 148-residue polypeptide: Sporulation inhibitor of replication protein SirA (148 aa).

It belongs to the SirA family. Interacts with DnaA. Forms a 1:1 complex with domain I of DnaA.

The protein localises to the cytoplasm. Inhibits DNA replication initiation during sporulation, preventing overinitiation and thus enforcing diploidy; probably the main regulator of sporulation replication initiation under Spo0A control. During sporulation SirA prevents DnaA association with the replication origin to prevent excessive chromosome replication. Alternatively SirA binds to domain I of DnaA and prevent its interaction with DnaD, preventing DNA replication initiation. Upon ectopic expression during vegetative growth reduces chromosome copy number, leading to elongated cells with that can have a single nucleoid or be anucleate. Ectopic expression during vegetative growth blocks DnaA at oriC while blocking recruitment of DnaD to oriC. Plays a significant role during the onset of sporulation. This is Sporulation inhibitor of replication protein SirA from Bacillus subtilis (strain 168).